A 312-amino-acid polypeptide reads, in one-letter code: Pectinesterase inhibitor 10 (312 aa).

The first 25 residues, 1–25 (MNILSQTQILHLSIAILLFITTSSS), serve as a signal peptide directing secretion. Low complexity-rich tracts occupy residues 24 to 36 (SSSL…SPSL) and 44 to 55 (SPSSAPPSSLSP). Residues 24–141 (SSSLSPSSSS…PSSSSSTYSN (118 aa)) are disordered. The segment covering 56 to 75 (SSPPPLSLSPSSPPPPPPSS) has biased composition (pro residues). Composition is skewed to low complexity over residues 76–85 (SPLSSLSPSL) and 93–104 (SPSSAPPSSLSP). The span at 105-124 (SSPPPLSLSPSSPPPPPPSS) shows a compositional bias: pro residues. A compositionally biased stretch (low complexity) spans 125–137 (SPLSSLSPSSSSS). Asn141, Asn153, Asn185, and Asn200 each carry an N-linked (GlcNAc...) asparagine glycan. Cys152 and Cys161 are disulfide-bonded. The cysteines at positions 218 and 268 are disulfide-linked.

This sequence belongs to the PMEI family.

Its subcellular location is the secreted. It is found in the extracellular space. The protein localises to the apoplast. Its function is as follows. Pectin methylesterase (PME) inhibitor involved in the maintenance of cell wall integrity in response to necrotrophic pathogens. Modulates PME activity and pectin methylesterification during infection by Botrytis cinerea and contributes to resistance against the pathogen. In Arabidopsis thaliana (Mouse-ear cress), this protein is Pectinesterase inhibitor 10.